The chain runs to 58 residues: Metallothionein (58 aa).

The interval 1–29 is beta; that stretch reads MPGPCCNDVCECAAGGCKTGCVCTSCRCS. A divalent metal cation-binding residues include Cys-5, Cys-6, Cys-10, Cys-12, Cys-17, Cys-21, Cys-23, Cys-26, Cys-28, Cys-31, Cys-34, Cys-38, Cys-40, Cys-46, Cys-50, Cys-54, Cys-56, and Cys-57. Positions 30–58 are alpha; sequence PCDKCTSGCKCPSKEECAKTCSKPCECCP.

Functionally, metallothioneins have a high content of cysteine residues that bind various heavy metals. Class I MTS in crustacea are involved in the sequestration of elevated levels of heavy-metal ions. The protein is Metallothionein of Astacus astacus (Noble crayfish).